The chain runs to 583 residues: Aspartate--tRNA ligase (583 aa).

Glu173 contributes to the L-aspartate binding site. Residues Gln197–Lys200 form an aspartate region. Arg219 contacts L-aspartate. ATP contacts are provided by residues Arg219–Glu221 and Gln228. His444 is a binding site for L-aspartate. An ATP-binding site is contributed by Glu478. Arg485 contacts L-aspartate. Residue Gly530–Arg533 participates in ATP binding.

Belongs to the class-II aminoacyl-tRNA synthetase family. Type 1 subfamily. Homodimer.

Its subcellular location is the cytoplasm. It catalyses the reaction tRNA(Asp) + L-aspartate + ATP = L-aspartyl-tRNA(Asp) + AMP + diphosphate. Functionally, catalyzes the attachment of L-aspartate to tRNA(Asp) in a two-step reaction: L-aspartate is first activated by ATP to form Asp-AMP and then transferred to the acceptor end of tRNA(Asp). The chain is Aspartate--tRNA ligase from Azobacteroides pseudotrichonymphae genomovar. CFP2.